The primary structure comprises 468 residues: Tripartite motif-containing protein 75 (468 aa).

An RING-type zinc finger spans residues 16–57 (CSICLDYLSDPVTIECGHNFCRSCIQQSWLDLQELFPCPVCR). The B box-type zinc-finger motif lies at 92 to 133 (EETTLCEKHNQPLSVFCKEDLMVLCPLCTQPPDHQGHHVRPI). 4 residues coordinate Zn(2+): Cys-97, His-100, Cys-119, and His-125. Residues 170 to 222 (LELREMVENQRQELSSEFEHLNQFLDREQQAVLSRLAEEEKDNQQKLSANITA) adopt a coiled-coil conformation. The B30.2/SPRY domain maps to 276–468 (CSFPPQYSAL…LRICTGTVCE (193 aa)).

This sequence belongs to the TRIM/RBCC family.

The protein localises to the cytoplasm. The protein resides in the cytoskeleton. It localises to the spindle. May play a role in female meiosis. The protein is Tripartite motif-containing protein 75 of Homo sapiens (Human).